Reading from the N-terminus, the 62-residue chain is Large ribosomal subunit protein eL37 (62 aa).

Residues C20, C23, C35, and C38 each contribute to the Zn(2+) site. The segment at C20–C38 adopts a C4-type zinc-finger fold.

The protein belongs to the eukaryotic ribosomal protein eL37 family. The cofactor is Zn(2+).

Its function is as follows. Binds to the 23S rRNA. The protein is Large ribosomal subunit protein eL37 of Staphylothermus marinus (strain ATCC 43588 / DSM 3639 / JCM 9404 / F1).